Consider the following 506-residue polypeptide: Cysteine--tRNA ligase (506 aa).

Residue Cys34 participates in Zn(2+) binding. The 'HIGH' region motif lies at 36 to 46; that stretch reads PTVYDFAHIGN. Zn(2+)-binding residues include Cys230, His269, and Glu273. A 'KMSKS' region motif is present at residues 302 to 306; it reads KMSKS. Lys305 is an ATP binding site.

Belongs to the class-I aminoacyl-tRNA synthetase family. Monomer. Requires Zn(2+) as cofactor.

The protein resides in the cytoplasm. The catalysed reaction is tRNA(Cys) + L-cysteine + ATP = L-cysteinyl-tRNA(Cys) + AMP + diphosphate. The chain is Cysteine--tRNA ligase from Brucella ovis (strain ATCC 25840 / 63/290 / NCTC 10512).